Reading from the N-terminus, the 456-residue chain is Adenylosuccinate lyase (456 aa).

N(6)-(1,2-dicarboxyethyl)-AMP-binding positions include 15-16 (RY), 90-92 (NHD), and 122-123 (TS). His171 functions as the Proton donor/acceptor in the catalytic mechanism. Residue Gln248 coordinates N(6)-(1,2-dicarboxyethyl)-AMP. The active-site Proton donor/acceptor is Ser296. Residues Ser297, 302–304 (KVN), Asn310, Arg336, and 341–345 (STVLR) each bind N(6)-(1,2-dicarboxyethyl)-AMP.

Belongs to the lyase 1 family. Adenylosuccinate lyase subfamily. Homotetramer. Residues from neighboring subunits contribute catalytic and substrate-binding residues to each active site.

The catalysed reaction is N(6)-(1,2-dicarboxyethyl)-AMP = fumarate + AMP. It catalyses the reaction (2S)-2-[5-amino-1-(5-phospho-beta-D-ribosyl)imidazole-4-carboxamido]succinate = 5-amino-1-(5-phospho-beta-D-ribosyl)imidazole-4-carboxamide + fumarate. It participates in purine metabolism; AMP biosynthesis via de novo pathway; AMP from IMP: step 2/2. It functions in the pathway purine metabolism; IMP biosynthesis via de novo pathway; 5-amino-1-(5-phospho-D-ribosyl)imidazole-4-carboxamide from 5-amino-1-(5-phospho-D-ribosyl)imidazole-4-carboxylate: step 2/2. Functionally, catalyzes two reactions in de novo purine nucleotide biosynthesis. Catalyzes the breakdown of 5-aminoimidazole- (N-succinylocarboxamide) ribotide (SAICAR or 2-[5-amino-1-(5-phospho-beta-D-ribosyl)imidazole-4-carboxamido]succinate) to 5-aminoimidazole-4-carboxamide ribotide (AICAR or 5-amino-1-(5-phospho-beta-D-ribosyl)imidazole-4-carboxamide) and fumarate, and of adenylosuccinate (ADS or N(6)-(1,2-dicarboxyethyl)-AMP) to adenosine monophosphate (AMP) and fumarate. This Pseudomonas aeruginosa (strain ATCC 15692 / DSM 22644 / CIP 104116 / JCM 14847 / LMG 12228 / 1C / PRS 101 / PAO1) protein is Adenylosuccinate lyase (purB).